Consider the following 562-residue polypeptide: Arginine--tRNA ligase (562 aa).

A 'HIGH' region motif is present at residues 129-139 (ANPTGPLHVGH).

Belongs to the class-I aminoacyl-tRNA synthetase family. As to quaternary structure, monomer.

It is found in the cytoplasm. The catalysed reaction is tRNA(Arg) + L-arginine + ATP = L-arginyl-tRNA(Arg) + AMP + diphosphate. The sequence is that of Arginine--tRNA ligase from Xanthomonas campestris pv. campestris (strain B100).